Consider the following 323-residue polypeptide: Dehydrogenase/reductase SDR family member 7B (323 aa).

The Cytoplasmic segment spans residues 1–17 (MISPSFRKGMLKERVMD). A helical; Signal-anchor for type II membrane protein membrane pass occupies residues 18-38 (LASQTTILPLLFGCLGIFSLF). The Lumenal portion of the chain corresponds to 39 to 323 (RLLQRIRSKA…ARKERKSKSS (285 aa)). Residues Ser-62 and Leu-64 each contribute to the NAD(+) site. A substrate-binding site is contributed by Ser-192. 3 residues coordinate NAD(+): Tyr-205, Lys-209, and Thr-240. Tyr-205 serves as the catalytic Proton acceptor.

It belongs to the short-chain dehydrogenases/reductases (SDR) family.

It is found in the endoplasmic reticulum membrane. Its function is as follows. Putative oxidoreductase. The sequence is that of Dehydrogenase/reductase SDR family member 7B from Mus musculus (Mouse).